We begin with the raw amino-acid sequence, 397 residues long: MSESVHTNTSLWSKGMKAVIVAQFLSAFGDNALLFATLALLKAQFYPEWSQPILQMVFVGAYILFAPFVGQVADSFAKGRVMMFANGLKLLGAASICFGINPFLGYTLVGVGAAAYSPAKYGILGELTTGSKLVKANGLMEASTIAAILLGSVAGGVLADWHVLVALAACALAYGGAVVANIYIPKLAAARPGQSWNLINMTRSFLNACTSLWRNGETRFSLVGTSLFWGAGVTLRFLLVLWVPVALGITDNATPTYLNAMVAIGIVVGAGAAAKLVTLETVSRCMPAGILIGVVVLIFSLQHELLPAYALLMLIGVLGGFFVVPLNALLQERGKKSVGAGNAIAVQNLGENSAMLLMLGIYSLAVMVGIPVVPIGIGFGTLFALAITALWIWQRRH.

Residues Met1 to Lys17 are Periplasmic-facing. The chain crosses the membrane as a helical span at residues Ala18 to Leu38. At Ala39–Pro52 the chain is on the cytoplasmic side. A helical transmembrane segment spans residues Ile53 to Ala73. Topologically, residues Asp74 to Leu90 are periplasmic. A helical membrane pass occupies residues Leu91–Val111. Topologically, residues Gly112–Thr144 are cytoplasmic. The helical transmembrane segment at Ile145–Val165 threads the bilayer. Residue Ala166 is a topological domain, periplasmic. Residues Leu167–Leu187 traverse the membrane as a helical segment. Residues Ala188–Ser226 lie on the Cytoplasmic side of the membrane. The helical transmembrane segment at Leu227–Leu247 threads the bilayer. Topologically, residues Gly248–Thr256 are periplasmic. Residues Tyr257–Val277 form a helical membrane-spanning segment. The Cytoplasmic segment spans residues Thr278–Glu280. A helical transmembrane segment spans residues Thr281 to Leu301. Over Gln302–Glu304 the chain is Periplasmic. A helical transmembrane segment spans residues Leu305–Pro325. Over Leu326–Ala343 the chain is Cytoplasmic. The chain crosses the membrane as a helical span at residues Ile344–Leu364. Residues Ala365–Val366 are Periplasmic-facing. A helical membrane pass occupies residues Met367 to Ile387. The Cytoplasmic segment spans residues Thr388 to His397.

Belongs to the major facilitator superfamily. LplT (TC 2.A.1.42) family.

It localises to the cell inner membrane. Its function is as follows. Catalyzes the facilitated diffusion of 2-acyl-glycero-3-phosphoethanolamine (2-acyl-GPE) into the cell. This chain is Lysophospholipid transporter LplT, found in Escherichia coli O9:H4 (strain HS).